Consider the following 318-residue polypeptide: Solute carrier family 25 member 34 (318 aa).

Solcar repeat units follow at residues 18-111 (VSPA…ACQA), 115-208 (QQPG…AKAW), and 218-309 (DSWL…LRKL). 6 helical membrane-spanning segments follow: residues 21–41 (AVDL…TNPL), 59–79 (TYPR…RADG), 112–134 (GLTQ…GAFV), 184–205 (VGAA…FTSA), 220–240 (WLAT…VMAP), and 292–315 (LGPH…RAQH).

This sequence belongs to the mitochondrial carrier (TC 2.A.29) family.

The protein localises to the mitochondrion inner membrane. The enzyme catalyses a dicarboxylate(in) + sulfate(out) = a dicarboxylate(out) + sulfate(in). Its function is as follows. Putative antiporter that exchanges dicarboxylates and sulfur oxoanions across the inner membrane of mitochondria. The protein is Solute carrier family 25 member 34 (Slc25a34) of Rattus norvegicus (Rat).